The following is a 223-amino-acid chain: Glutathione S-transferase alpha I (223 aa).

Methionine 1 carries the N-acetylmethionine modification. Position 2 is an N-acetylalanine; in Glutathione S-transferase alpha I, N-terminally processed (alanine 2). One can recognise a GST N-terminal domain in the interval 3–83 (RKPLLHYFNG…YVANKHNLYG (81 aa)). Lysine 4 bears the N6-succinyllysine mark. Residues tyrosine 9, arginine 45, 54-55 (QV), and 67-68 (QT) contribute to the glutathione site. A GST C-terminal domain is found at 85–208 (DMKERALIDM…QPGSQRKPPM (124 aa)).

This sequence belongs to the GST superfamily. Alpha family. As to quaternary structure, homodimer or heterodimer of GSTA1 and GSTA2. Liver and lung.

It localises to the cytoplasm. The enzyme catalyses RX + glutathione = an S-substituted glutathione + a halide anion + H(+). The catalysed reaction is prostaglandin A2 + glutathione = prostaglandin A2-S-(R)-glutathione. It catalyses the reaction prostaglandin J2 + glutathione = prostaglandin J2-S-(R)-glutathione. It carries out the reaction (13S)-hydroperoxy-(9Z,11E)-octadecadienoate + 2 glutathione = (13S)-hydroxy-(9Z,11E)-octadecadienoate + glutathione disulfide + H2O. The enzyme catalyses androst-5-ene-3,17-dione = androst-4-ene-3,17-dione. In terms of biological role, glutathione S-transferase that catalyzes the nucleophilic attack of the sulfur atom of glutathione on the electrophilic groups of a wide range of exogenous and endogenous compounds. Involved in the formation of glutathione conjugates of both prostaglandin A2 (PGA2) and prostaglandin J2 (PGJ2). It also catalyzes the isomerization of D5-androstene-3,17-dione (AD) into D4-androstene-3,17-dione and may therefore play an important role in hormone biosynthesis. Through its glutathione-dependent peroxidase activity toward the fatty acid hydroperoxide (13S)-hydroperoxy-(9Z,11E)-octadecadienoate/13-HPODE it is also involved in the metabolism of oxidized linoleic acid. The protein is Glutathione S-transferase alpha I of Oryctolagus cuniculus (Rabbit).